Consider the following 232-residue polypeptide: Large ribosomal subunit protein uL1 (232 aa).

Belongs to the universal ribosomal protein uL1 family. As to quaternary structure, part of the 50S ribosomal subunit.

Its function is as follows. Binds directly to 23S rRNA. The L1 stalk is quite mobile in the ribosome, and is involved in E site tRNA release. Functionally, protein L1 is also a translational repressor protein, it controls the translation of the L11 operon by binding to its mRNA. This chain is Large ribosomal subunit protein uL1, found in Lysinibacillus sphaericus (strain C3-41).